The following is a 61-amino-acid chain: Small ribosomal subunit protein uS14 (61 aa).

Zn(2+) contacts are provided by Cys24, Cys27, Cys40, and Cys43.

Belongs to the universal ribosomal protein uS14 family. Zinc-binding uS14 subfamily. Part of the 30S ribosomal subunit. Contacts proteins S3 and S10. Requires Zn(2+) as cofactor.

Binds 16S rRNA, required for the assembly of 30S particles and may also be responsible for determining the conformation of the 16S rRNA at the A site. The polypeptide is Small ribosomal subunit protein uS14 (Pseudothermotoga lettingae (strain ATCC BAA-301 / DSM 14385 / NBRC 107922 / TMO) (Thermotoga lettingae)).